Consider the following 543-residue polypeptide: MAAKELHFNVDARAALKRGVDQLAEAVKVTLGPKGRNVVIDKKFGAPTVTKDGVTVAKEIELADPIENMGAQMVKEVATKTSDLAGDGTTTATVLAQAIFREGLKNVTAGSNPMALKRGIEKAVAGIVEELKRISVPTTGKKEIAQVGTISANNDPEIGNLIAEAMEKVGKDGVITVEEAKGLETTLETVDGMQFDRGYLSPYFVTDPEKMEAVLENALILIHDKKISAMKDLLPALEKVAQLGKPLLIIAEDVEGEALATLVVNKLRGTLRICAVKAPGFGDRRKAMLQDIATLTKGQVISDEVGFKLENAVLTDLGSAKRIVIDKDNTTIIDGAGEQKDIEGRVREIRGAIDKSTSDYDREKLQERLAKLAGGVAVINVGAATEAEMKEKKARVEDALHATRAAVEEGIVPGGGVALIRAQHVLKDVKVAERDEQIGVDIVRRAIEEPLRMIVQNAGGEGSIVVEKIRTAKETSFGYNALTDVYEDLVQAGVIDPTKVTRTALQNAASIAGLLLTTEALIVEKKEDKPAAPAGGPGMGGMY.

Residues threonine 30–proline 33, lysine 51, aspartate 87–threonine 91, glycine 415, asparagine 480–leucine 482, and aspartate 496 each bind ATP.

The protein belongs to the chaperonin (HSP60) family. Forms a cylinder of 14 subunits composed of two heptameric rings stacked back-to-back. Interacts with the co-chaperonin GroES.

The protein localises to the cytoplasm. It catalyses the reaction ATP + H2O + a folded polypeptide = ADP + phosphate + an unfolded polypeptide.. Together with its co-chaperonin GroES, plays an essential role in assisting protein folding. The GroEL-GroES system forms a nano-cage that allows encapsulation of the non-native substrate proteins and provides a physical environment optimized to promote and accelerate protein folding. This chain is Chaperonin GroEL, found in Gemmatimonas aurantiaca (strain DSM 14586 / JCM 11422 / NBRC 100505 / T-27).